Reading from the N-terminus, the 107-residue chain is Phosphoribosyl-ATP pyrophosphatase (107 aa).

This sequence belongs to the PRA-PH family.

The protein resides in the cytoplasm. It carries out the reaction 1-(5-phospho-beta-D-ribosyl)-ATP + H2O = 1-(5-phospho-beta-D-ribosyl)-5'-AMP + diphosphate + H(+). Its pathway is amino-acid biosynthesis; L-histidine biosynthesis; L-histidine from 5-phospho-alpha-D-ribose 1-diphosphate: step 2/9. The polypeptide is Phosphoribosyl-ATP pyrophosphatase (Bacillus cereus (strain ZK / E33L)).